A 397-amino-acid chain; its full sequence is uncharacterized protein (397 aa).

Belongs to the ROK (NagC/XylR) family.

This is an uncharacterized protein from Escherichia coli (strain K12).